A 651-amino-acid chain; its full sequence is Chaperone protein HtpG (651 aa).

The tract at residues 1-353 is a; substrate-binding; that stretch reads MAPHVEQLEF…AQDMSLNVSR (353 aa). Positions 354-569 are b; the sequence is EILQQDRQIR…TFGITPALAR (216 aa). The interval 570–651 is c; the sequence is MYRASGQPVP…RLTRMVGEQS (82 aa).

This sequence belongs to the heat shock protein 90 family. Homodimer.

The protein resides in the cytoplasm. Molecular chaperone. Has ATPase activity. This is Chaperone protein HtpG from Mycolicibacterium gilvum (strain PYR-GCK) (Mycobacterium gilvum (strain PYR-GCK)).